A 262-amino-acid chain; its full sequence is Acyl-[acyl-carrier-protein]--UDP-N-acetylglucosamine O-acyltransferase (262 aa).

This sequence belongs to the transferase hexapeptide repeat family. LpxA subfamily. As to quaternary structure, homotrimer.

It is found in the cytoplasm. It catalyses the reaction a (3R)-hydroxyacyl-[ACP] + UDP-N-acetyl-alpha-D-glucosamine = a UDP-3-O-[(3R)-3-hydroxyacyl]-N-acetyl-alpha-D-glucosamine + holo-[ACP]. Its pathway is glycolipid biosynthesis; lipid IV(A) biosynthesis; lipid IV(A) from (3R)-3-hydroxytetradecanoyl-[acyl-carrier-protein] and UDP-N-acetyl-alpha-D-glucosamine: step 1/6. Functionally, involved in the biosynthesis of lipid A, a phosphorylated glycolipid that anchors the lipopolysaccharide to the outer membrane of the cell. The polypeptide is Acyl-[acyl-carrier-protein]--UDP-N-acetylglucosamine O-acyltransferase (Haemophilus influenzae (strain PittEE)).